Consider the following 833-residue polypeptide: P protein (833 aa).

At 1-172 the chain is on the cytoplasmic side; sequence MRLENKDIRL…QVSKLGCCVR (172 aa). Residues 173–193 traverse the membrane as a helical segment; the sequence is WIKITGLFVFVVLCSILFSLY. Over 194 to 325 the chain is Extracellular; that stretch reads PDQGKFWQLL…QFLGASVEAQ (132 aa). N-linked (GlcNAc...) asparagine glycosylation is found at N210, N214, and N269. Residues 326–346 form a helical membrane-spanning segment; the sequence is VASAVAILAGVYTLIIFEIVH. At 347-348 the chain is on the cytoplasmic side; that stretch reads RT. A helical membrane pass occupies residues 349-369; it reads LAAMLGALAALAALAVVGDRP. Over 370–381 the chain is Extracellular; the sequence is SLTHVVEWIDFE. Residues 382-402 form a helical membrane-spanning segment; that stretch reads TLALLFGMMILVAVFSETGFF. At 403 to 417 the chain is on the cytoplasmic side; the sequence is DYCAVKAYQLSRGRV. The chain crosses the membrane as a helical span at residues 418–438; that stretch reads WAMIFMLCLMAAILSAFLDNV. Residues 439-501 are Extracellular-facing; it reads TTMLLFTPVT…ELRKMGLDFA (63 aa). Residues 502–522 form a helical membrane-spanning segment; sequence GFTAHMFLGICLVLLVSFPLL. The Cytoplasmic segment spans residues 523 to 617; sequence RLLYWNKKLY…RKHRISDRSL (95 aa). Residues 618 to 638 traverse the membrane as a helical segment; that stretch reads LVKCLTVLGFVISMFFLNSFV. Position 639 (P639) is a topological domain, extracellular. A helical transmembrane segment spans residues 640-660; the sequence is GIHLDLGWIAILGAIWLLILA. Residues 661-675 lie on the Cytoplasmic side of the membrane; that stretch reads DIHDFEIILHRVEWA. The helical transmembrane segment at 676–696 threads the bilayer; sequence TLLFFAALFVLMEALTHLHLV. Residues 697–718 are Extracellular-facing; that stretch reads EYVGEQTALLIKMVPEDQRFAA. A helical transmembrane segment spans residues 719-739; that stretch reads AIVLIVWVSALASSLIDNIPF. The Cytoplasmic portion of the chain corresponds to 740–759; the sequence is TATMIPVLLNLSQDPEISLP. The chain crosses the membrane as a helical span at residues 760 to 780; sequence ALPLMYALALGACLGGNGTLI. Residues 781 to 810 lie on the Extracellular side of the membrane; the sequence is GASTNVVCAGIAEKHGYGFSFMEFFRLGFP. A helical membrane pass occupies residues 811–831; sequence VMLMSCTIGMCYLLIAHIVVG. The Cytoplasmic segment spans residues 832-833; it reads WN.

The protein belongs to the CitM (TC 2.A.11) transporter family. As to expression, most abundant in melanocytes. Also present in neonatal and adult eye tissue presumably as a result of expression in the retinal pigmented epithelium and choroid body, known sites of melanogenesis in the eye. Small but detectable amounts also observed in fetal, neonatal and adult brain. Moderate amounts detected in adult testis and ovary. Not detected in heart, kidney, spleen, liver or thymus.

It localises to the melanosome membrane. The catalysed reaction is chloride(in) = chloride(out). Functionally, contributes to a melanosome-specific anion (chloride) current that modulates melanosomal pH for optimal tyrosinase activity required for melanogenesis and the melanosome maturation. One of the components of the mammalian pigmentary system. May serve as a key control point at which color variation is determined. Major determinant of eye color. Seems to regulate the post-translational processing of tyrosinase, which catalyzes the limiting reaction in melanin synthesis. The polypeptide is P protein (Oca2) (Mus musculus (Mouse)).